Consider the following 213-residue polypeptide: Agglutinin isolectin 2 (213 aa).

The signal sequence occupies residues 1-27 (MRKMMSTMALTLGAAVFLAFAAATAQA). Pyrrolidone carboxylic acid is present on Gln-28. 4 consecutive Chitin-binding type-1 domains span residues 28 to 69 (QRCG…ACWT), 70 to 112 (SKRC…PCRA), 113 to 155 (DIKC…ACST), and 156 to 198 (DKPC…GCDA). Disulfide bonds link Cys-30–Cys-45, Cys-39–Cys-51, Cys-44–Cys-58, Cys-62–Cys-67, Cys-73–Cys-88, Cys-82–Cys-94, Cys-87–Cys-101, Cys-105–Cys-110, Cys-116–Cys-131, Cys-125–Cys-137, Cys-130–Cys-144, Cys-148–Cys-153, Cys-159–Cys-174, Cys-168–Cys-180, Cys-173–Cys-187, and Cys-191–Cys-196. 37–39 (MEC) contacts substrate. Position 89–100 (89–100 (SQYGHCGFGAEY)) interacts with substrate. 141–142 (SE) is a binding site for substrate. Positions 199–213 (VFAGAITANSTLLAE) are excised as a propeptide.

Homodimer, u-shaped.

Functionally, N-acetyl-D-glucosamine / N-acetyl-D-neuraminic acid binding lectin. The sequence is that of Agglutinin isolectin 2 from Triticum aestivum (Wheat).